A 210-amino-acid polypeptide reads, in one-letter code: Somatotropin (210 aa).

The first 22 residues, 1 to 22 (MGQVFLLMPVLLVSCFLSQGAA), serve as a signal peptide directing secretion. His-38 serves as a coordination point for Zn(2+). An intrachain disulfide couples Cys-71 to Cys-183. Residue Glu-192 participates in Zn(2+) binding. Cys-200 and Cys-208 form a disulfide bridge.

Belongs to the somatotropin/prolactin family.

It localises to the secreted. Functionally, growth hormone plays an important role in growth control and is involved in the regulation of several anabolic processes. Implicated as an osmoregulatory substance important for seawater adaptation. This is Somatotropin (gh) from Salmo salar (Atlantic salmon).